The chain runs to 235 residues: Biosynthetic peptidoglycan transglycosylase (235 aa).

A helical membrane pass occupies residues 12–34 (GLGKLLLAALLSTIVSVALLRFI).

This sequence belongs to the glycosyltransferase 51 family.

The protein resides in the cell inner membrane. The catalysed reaction is [GlcNAc-(1-&gt;4)-Mur2Ac(oyl-L-Ala-gamma-D-Glu-L-Lys-D-Ala-D-Ala)](n)-di-trans,octa-cis-undecaprenyl diphosphate + beta-D-GlcNAc-(1-&gt;4)-Mur2Ac(oyl-L-Ala-gamma-D-Glu-L-Lys-D-Ala-D-Ala)-di-trans,octa-cis-undecaprenyl diphosphate = [GlcNAc-(1-&gt;4)-Mur2Ac(oyl-L-Ala-gamma-D-Glu-L-Lys-D-Ala-D-Ala)](n+1)-di-trans,octa-cis-undecaprenyl diphosphate + di-trans,octa-cis-undecaprenyl diphosphate + H(+). The protein operates within cell wall biogenesis; peptidoglycan biosynthesis. Its function is as follows. Peptidoglycan polymerase that catalyzes glycan chain elongation from lipid-linked precursors. The sequence is that of Biosynthetic peptidoglycan transglycosylase from Aeromonas hydrophila subsp. hydrophila (strain ATCC 7966 / DSM 30187 / BCRC 13018 / CCUG 14551 / JCM 1027 / KCTC 2358 / NCIMB 9240 / NCTC 8049).